The sequence spans 652 residues: DNA ligase (652 aa).

Residues Asp-29–Asp-33, Ser-78–Leu-79, and Glu-107 contribute to the NAD(+) site. Residue Lys-109 is the N6-AMP-lysine intermediate of the active site. Residues Arg-130, Glu-164, Lys-278, and Lys-302 each coordinate NAD(+). Residues Cys-395, Cys-398, Cys-413, and Cys-418 each coordinate Zn(2+). The BRCT domain maps to Val-577 to Leu-652.

The protein belongs to the NAD-dependent DNA ligase family. LigA subfamily. Mg(2+) is required as a cofactor. Mn(2+) serves as cofactor.

It carries out the reaction NAD(+) + (deoxyribonucleotide)n-3'-hydroxyl + 5'-phospho-(deoxyribonucleotide)m = (deoxyribonucleotide)n+m + AMP + beta-nicotinamide D-nucleotide.. Its function is as follows. DNA ligase that catalyzes the formation of phosphodiester linkages between 5'-phosphoryl and 3'-hydroxyl groups in double-stranded DNA using NAD as a coenzyme and as the energy source for the reaction. It is essential for DNA replication and repair of damaged DNA. The protein is DNA ligase of Streptococcus pneumoniae (strain JJA).